The chain runs to 462 residues: Fez family zinc finger protein 1 (462 aa).

The short motif at 34–49 is the Engrailed homology 1 repressor element; that stretch reads PLAFSIERIMSRTPEP. 6 consecutive C2H2-type zinc fingers follow at residues 260–282, 288–310, 316–338, 344–366, 372–394, and 400–423; these read FTCE…MPVH, FVCK…KIIH, HKCN…TRIH, FVCE…KLTH, FKCN…MHTH, and FTCP…RKLH. Residues 441–462 form a disordered region; the sequence is LLLPNREPSPTIQSPQLQKSGY. Polar residues predominate over residues 448 to 462; it reads PSPTIQSPQLQKSGY.

This sequence belongs to the krueppel C2H2-type zinc-finger protein family.

It localises to the nucleus. In terms of biological role, transcription repressor. Involved in the development of the forebrain region. The polypeptide is Fez family zinc finger protein 1 (fezf1) (Xenopus tropicalis (Western clawed frog)).